A 1380-amino-acid polypeptide reads, in one-letter code: DNA-directed RNA polymerase subunit beta (1380 aa).

It belongs to the RNA polymerase beta chain family. The RNAP catalytic core consists of 2 alpha, 1 beta, 1 beta' and 1 omega subunit. When a sigma factor is associated with the core the holoenzyme is formed, which can initiate transcription.

It catalyses the reaction RNA(n) + a ribonucleoside 5'-triphosphate = RNA(n+1) + diphosphate. In terms of biological role, DNA-dependent RNA polymerase catalyzes the transcription of DNA into RNA using the four ribonucleoside triphosphates as substrates. The chain is DNA-directed RNA polymerase subunit beta from Nitrobacter hamburgensis (strain DSM 10229 / NCIMB 13809 / X14).